A 141-amino-acid chain; its full sequence is Hemoglobin subunit alpha-2 (141 aa).

The Globin domain maps to Val1–Arg141. His58 lines the O2 pocket. His87 serves as a coordination point for heme b.

The protein belongs to the globin family. The major hemoglobin component (HbIII) is a heterotetramer of two alpha-2 chains and two beta-1 chains. Red blood cells.

Its function is as follows. Involved in oxygen transport from the lung to the various peripheral tissues. This chain is Hemoglobin subunit alpha-2, found in Varanus albigularis (White-throated monitor).